The sequence spans 337 residues: Glyceraldehyde-3-phosphate dehydrogenase (337 aa).

NAD(+)-binding positions include 17–18 (RI), aspartate 39, lysine 83, and serine 125. Residues 156–158 (SCT), threonine 187, arginine 202, 215–216 (TG), and arginine 238 contribute to the D-glyceraldehyde 3-phosphate site. Residue cysteine 157 is the Nucleophile of the active site. Asparagine 319 contacts NAD(+).

The protein belongs to the glyceraldehyde-3-phosphate dehydrogenase family. As to quaternary structure, homotetramer.

It localises to the cytoplasm. It catalyses the reaction D-glyceraldehyde 3-phosphate + phosphate + NAD(+) = (2R)-3-phospho-glyceroyl phosphate + NADH + H(+). It participates in carbohydrate degradation; glycolysis; pyruvate from D-glyceraldehyde 3-phosphate: step 1/5. Functionally, catalyzes the oxidative phosphorylation of glyceraldehyde 3-phosphate (G3P) to 1,3-bisphosphoglycerate (BPG) using the cofactor NAD. The first reaction step involves the formation of a hemiacetal intermediate between G3P and a cysteine residue, and this hemiacetal intermediate is then oxidized to a thioester, with concomitant reduction of NAD to NADH. The reduced NADH is then exchanged with the second NAD, and the thioester is attacked by a nucleophilic inorganic phosphate to produce BPG. The chain is Glyceraldehyde-3-phosphate dehydrogenase (gapA) from Mycoplasma genitalium (strain ATCC 33530 / DSM 19775 / NCTC 10195 / G37) (Mycoplasmoides genitalium).